Consider the following 1218-residue polypeptide: MPAIQSPSGKILQLEMENFKSYKGHQLVGPFKDFTAIIGPNGSGKSNLMDAISFVLGVRTGQLRGSQLKDLIYAFDDRDKEQRGRKAFVRLVYQMDDGVELRFTRSITSAGGSEYRIDNRVVNLDEYNGKLRSLGILVKARNFLVFQGDVESIASKNPKELTGLLEEISGSEELKKEYEGLEEKKASAEEKAALIYQKKKTIGNEKKLKKAQKEEAEKHLRLQEELKALKRERFLWQLYNIENDIEKANEDVDSEKSNRKDVMRELEKFEREAGKRKVEQAKYLKEIAQREKKIAEKSSKLGKIQPELLRFKEEIARIKAKIETNRKDVDKRKKEKGKHSKEIEQMQKSIKELNKKMELFNKKRQDSSGKLPMLDSQLQDYFRLKEEAGMKTIKLRDEHEVLERQRRTDLEALRNLEENYQQLINRKNDLDEQIKRFKDRQGEIETSSSKYKNETTSLKTELRALQEKHVNAREASAKLKTRIAELEDQLSDLTAERYENERDSRLTQAVESLKRLFQGVHGRMTDLCRPNRKKYNLAVTVAMGRFMDAVVVEDENTGKDCIKYLKEQRLPPMTFIPLQSVRVKQVFERLRNLGGTAKLVFDVIQFDPELEKAVLYAVGNTLVCDELEEAKVLSWSGERFKVVTVDGILLTKAGTMTGGTSGGMEAKSNKWDDKKIEGLKKNKEDFEQQLENIGSIREMQMKESEISGKISGLEKKIQYAEIEKKSIKDKLPQLEQEERNIIEEIDRIKPELSKARTEVDKRKTEMNKLEKRMNEIVDRIYKDFSQSVGVPNIRVYEETQLKTAEKEAEERLELSNQLAKLKYQLEYEQNRDVGSRIRKIESSISSLETDLEGIQKTMSERKETAVKITNEINNWKKEMEECKQKSEEYEKEILDWKKQASQATTSITKLNRQIHSKETQIEQLISQKQEITEKCELEHITLPVLSDAMEEDDSDGPQFDFSELGRAYLQERRPSAREKVEAEFRQKIESKTSEIERTAPNLRALDQYEAIQEKEKQVSQEFEAARKEEKQVADAFNTVKQKRYELFMEAFNHIASNIDKIYKQLTKSNTHPLGGTAYLNLENEDDPFLHGIKYTTMPPTKRFRDMEQLSGGEKTVAALALLFSIHSYRPSPFFILDEVDAALDNLNVAKVAKFIRSKSCQAARDNQDAEDGNGFQSIVISLKDSFYDKAEALVGVYRDTERSCSSTMSFDLRNYQES.

One can recognise a Zinc-hook domain in the interval 11–1200 (ILQLEMENFK…EALVGVYRDT (1190 aa)). Residue 39-46 (GPNGSGKS) coordinates ATP. Residues 159 to 505 (KELTGLLEEI…ERYENERDSR (347 aa)) adopt a coiled-coil conformation. 2 consecutive short sequence motifs (nuclear localization signal) follow at residues 183 to 190 (EKKASAEE) and 425 to 432 (NRKNDLDE). The region spanning 518-632 (QGVHGRMTDL…VCDELEEAKV (115 aa)) is the SMC hinge domain. Coiled coils occupy residues 671–938 (WDDK…CELE) and 1003–1035 (RALD…VADA).

It belongs to the SMC family. SMC1 subfamily. Cohesin complexes are composed of the SMC1 and SMC3 heterodimer attached via their SMC hinge domain, SCC3, and an alpha-kleisin subunit SCC1 linked to one SYN subunit (SYN1, SYN2, SYN3 or SYN4). In terms of tissue distribution, mostly expressed in flower buds and stems, and, to a lower extent, in leaves and roots.

It is found in the nucleus. The protein resides in the chromosome. In terms of biological role, central component of cohesin, a complex required for chromosome cohesion during the cell cycle. The cohesin complex may form a large proteinaceous ring within which sister chromatids can be trapped. At anaphase, the complex is cleaved and dissociates from chromatin, allowing sister chromatids to segregate. Cohesion is coupled to DNA replication and is involved in DNA repair. The cohesin complex also plays an important role in spindle pole assembly during mitosis and in chromosomes movement. Essential protein plant viability. Required for chromosome segregation (e.g. sister chromatid alignment) and cell division during embryogenesis. This is Structural maintenance of chromosomes protein 1 (SMC1) from Arabidopsis thaliana (Mouse-ear cress).